Reading from the N-terminus, the 346-residue chain is MQSITIRRPDDWHLHLRDGAMLEGVIADTSRTFARAIIMPNLVPPVVTTSDATAYRERILKALPAGHRFQPLMTLYLTEHTSPDDVEAGARSGLITAVKLYPAGATTNSHGGVRDMEKAMPVLERMAAIGLPLCVHGEVTTPEVDIFDREAVFIDTVLDPLRRRLPELKVTMEHVTTSDGIDYIKAAKANLAGSITSHHLIINRNAILVGGIRPHYYCLPVAKRENHRLALRAAAVSGDARFFLGTDSAPHVDPLKECACGCAGIYTSINTMSCLAHVFEEEDALDRLEAFTSLNGPAWYGLQPNEERITLSRQAEPVVFPAKIETGAGSVTVFDPMYPLHWHVVA.

His13 and His15 together coordinate Zn(2+). Residues 15–17 and Asn41 each bind substrate; that span reads HLR. Lys99, His136, and His174 together coordinate Zn(2+). The residue at position 99 (Lys99) is an N6-carboxylysine. His136 is a substrate binding site. Leu219 contributes to the substrate binding site. Zn(2+) is bound at residue Asp247. Asp247 is a catalytic residue. Substrate contacts are provided by His251 and Ala263.

Belongs to the metallo-dependent hydrolases superfamily. DHOase family. Class II DHOase subfamily. Homodimer. Zn(2+) is required as a cofactor.

The enzyme catalyses (S)-dihydroorotate + H2O = N-carbamoyl-L-aspartate + H(+). The protein operates within pyrimidine metabolism; UMP biosynthesis via de novo pathway; (S)-dihydroorotate from bicarbonate: step 3/3. Its function is as follows. Catalyzes the reversible cyclization of carbamoyl aspartate to dihydroorotate. The chain is Dihydroorotase from Rhizobium leguminosarum bv. trifolii (strain WSM2304).